A 486-amino-acid polypeptide reads, in one-letter code: Glutamate--tRNA ligase (486 aa).

A 'HIGH' region motif is present at residues 11–21 (PSPTGVVHIGN). The 'KMSKS' region motif lies at 255 to 259 (KLSKR). An ATP-binding site is contributed by K258.

The protein belongs to the class-I aminoacyl-tRNA synthetase family. Glutamate--tRNA ligase type 1 subfamily. As to quaternary structure, monomer.

The protein resides in the cytoplasm. The enzyme catalyses tRNA(Glu) + L-glutamate + ATP = L-glutamyl-tRNA(Glu) + AMP + diphosphate. Its function is as follows. Catalyzes the attachment of glutamate to tRNA(Glu) in a two-step reaction: glutamate is first activated by ATP to form Glu-AMP and then transferred to the acceptor end of tRNA(Glu). The chain is Glutamate--tRNA ligase from Streptococcus pneumoniae (strain CGSP14).